Here is a 457-residue protein sequence, read N- to C-terminus: Glycine receptor subunit alpha-1 (457 aa).

An N-terminal signal peptide occupies residues 1–28 (MYSFNTLRLYLWETIVFFSLAASKEAEA). Residues 29–250 (ARSAPKPMSP…RFHLERQMGY (222 aa)) are Extracellular-facing. N-linked (GlcNAc...) asparagine glycosylation occurs at Asn-66. Glycine contacts are provided by Arg-93 and Ser-157. Residues Cys-166 and Cys-180 are joined by a disulfide bond. 2 residues coordinate Zn(2+): Glu-220 and Asp-222. Cys-226 and Cys-237 are disulfide-bonded. Residue 230 to 235 (YNTGKF) coordinates strychnine. Thr-232 provides a ligand contact to glycine. A Zn(2+)-binding site is contributed by His-243. A helical membrane pass occupies residues 251–272 (YLIQMYIPSLLIVILSWISFWI). Over 273–277 (NMDAA) the chain is Cytoplasmic. The chain crosses the membrane as a helical span at residues 278 to 298 (PARVGLGITTVLTMTTQSSGS). The Extracellular segment spans residues 299–309 (RASLPKVSYVK). Residues 310 to 330 (AIDIWMAVCLLFVFSALLEYA) form a helical membrane-spanning segment. Topologically, residues 331–425 (AVNFVSRQHK…FIQRAKKIDK (95 aa)) are cytoplasmic. The interval 391–410 (KGANNSNTTNPPPAPSKSPE) is disordered. A helical transmembrane segment spans residues 426–446 (ISRIGFPMAFLIFNMFYWIIY). At 447 to 457 (KIVRREDVHNQ) the chain is on the extracellular side.

This sequence belongs to the ligand-gated ion channel (TC 1.A.9) family. Glycine receptor (TC 1.A.9.3) subfamily. GLRA1 sub-subfamily. In terms of assembly, interacts with GLRB to form heteropentameric channels; this is probably the predominant form in vivo. Heteropentamer composed of four GLRA1 subunits and one GLRB subunit. Heteropentamer composed of two GLRA1 and three GLRB. Heteropentamer composed of three GLRA1 and two GLRB. Homopentamer (in vitro). Both homopentamers and heteropentamers form functional ion channels, but their characteristics are subtly different.

Its subcellular location is the postsynaptic cell membrane. The protein localises to the synapse. It is found in the perikaryon. The protein resides in the cell projection. It localises to the dendrite. Its subcellular location is the cell membrane. It catalyses the reaction chloride(in) = chloride(out). Its activity is regulated as follows. Channel opening is triggered by extracellular glycine. Channel characteristics depend on the subunit composition; heteropentameric channels are activated by lower glycine levels and display faster desensitization. Channel opening is also triggered by taurine and beta-alanine. Channel activity is potentiated by nanomolar concentrations of Zn(2+); half-maximal activation is observed with 37 nM Zn(2+). Inhibited by higher Zn(2+) levels; haf-maximal inhibition occurs at 20 uM Zn(2+). Inhibited by strychnine. Strychnine binding locks the channel in a closed conformation and prevents channel opening in response to extracellular glycine. Inhibited by lindane. Inhibited by picrotoxin. Functionally, subunit of heteromeric glycine-gated chloride channels. Plays an important role in the down-regulation of neuronal excitability. Contributes to the generation of inhibitory postsynaptic currents. Channel activity is potentiated by ethanol. Potentiation of channel activity by intoxicating levels of ethanol contribute to the sedative effects of ethanol. This is Glycine receptor subunit alpha-1 (GLRA1) from Homo sapiens (Human).